The following is a 491-amino-acid chain: Lysine--tRNA ligase (491 aa).

The Mg(2+) site is built by Glu398 and Glu405.

Belongs to the class-II aminoacyl-tRNA synthetase family. As to quaternary structure, homodimer. Requires Mg(2+) as cofactor.

It is found in the cytoplasm. The catalysed reaction is tRNA(Lys) + L-lysine + ATP = L-lysyl-tRNA(Lys) + AMP + diphosphate. The protein is Lysine--tRNA ligase of Mycoplasmopsis synoviae (strain 53) (Mycoplasma synoviae).